The following is a 677-amino-acid chain: WD repeat-containing protein 48 (677 aa).

Tyrosine 28 is modified (phosphotyrosine). WD repeat units lie at residues 28 to 67, 73 to 112, 115 to 154, 166 to 205, 208 to 247, 250 to 289, 292 to 334, and 358 to 397; these read YNRN…QDPY, HHTD…CMST, THKD…ALTA, GNKD…KLMK, GHTD…CIAT, VHDE…IRVL, EEKA…NFRA, and KGGA…KVED. N6-acetyllysine is present on lysine 214. Position 578 is an N6-acetyllysine (lysine 578). The tract at residues 607–628 is disordered; it reads LDNESQTTSSSNNEKPGEQEKE. Low complexity predominate over residues 609–620; it reads NESQTTSSSNNE. Residue threonine 613 is modified to Phosphothreonine.

Belongs to the WD repeat WDR48 family. In terms of assembly, interacts with USP46. Interacts with USP1. Interacts with USP12. Component of the USP12-WDR20-WDR48 deubiquitinating complex. Component of the USP12-DMWD-WDR48 deubiquitinating complex. Interacts with PHLPP1. Interacts with RAD51AP1; the interaction is direct and promotes formation of a trimeric complex with RAD51 via RAD51AP1. Interacts with ATAD5; the interaction regulates USP1-mediated PCNA deubiquitination. Interacts with RAD51; the interaction is enhanced under replication stress. Interacts with ITCH; the interaction is more efficient when both USP12 and WDR48/UAF1 are involved and may facilitate recruitment of the USP12 deubiquitinating complex to Notch. (Microbial infection) Interacts with papillomavirus HPV11 E1 protein. As to quaternary structure, (Microbial infection) Interacts with Saimiriine herpesvirus TIP protein. In terms of assembly, (Microbial infection) Interacts with human cytomegalovirus protein UL138. (Microbial infection) Interacts with Epstein-Barr virus protein EBNA3. Ubiquitous.

Its subcellular location is the nucleus. It is found in the cytoplasm. The protein localises to the lysosome. The protein resides in the late endosome. Regulator of deubiquitinating complexes, which acts as a strong activator of USP1, USP12 and USP46. Enhances the USP1-mediated deubiquitination of FANCD2; USP1 being almost inactive by itself. Activates deubiquitination by increasing the catalytic turnover without increasing the affinity of deubiquitinating enzymes for the substrate. Also activates deubiquitinating activity of complexes containing USP12. In complex with USP12, acts as a potential tumor suppressor by positively regulating PHLPP1 stability. Docks at the distal end of the USP12 fingers domain and induces a cascade of structural changes leading to the activation of the enzyme. Together with RAD51AP1, promotes DNA repair by stimulating RAD51-mediated homologous recombination. Binds single-stranded DNA (ssDNA) and double-stranded DNA (dsDNA). DNA-binding is required both for USP1-mediated deubiquitination of FANCD2 and stimulation of RAD51-mediated homologous recombination: both WDR48/UAF1 and RAD51AP1 have coordinated role in DNA-binding during these processes. Together with ATAD5 and by regulating USP1 activity, has a role in PCNA-mediated translesion synthesis (TLS) by deubiquitinating monoubiquitinated PCNA. Together with ATAD5, has a role in recruiting RAD51 to stalled forks during replication stress. In terms of biological role, (Microbial infection) In case of infection by Herpesvirus saimiri, may play a role in vesicular transport or membrane fusion events necessary for transport to lysosomes. Induces lysosomal vesicle formation via interaction with Herpesvirus saimiri tyrosine kinase-interacting protein (TIP). Subsequently, TIP recruits tyrosine-protein kinase LCK, resulting in down-regulation of T-cell antigen receptor TCR. May play a role in generation of enlarged endosomal vesicles via interaction with TIP. In case of infection by papillomavirus HPV11, promotes the maintenance of the viral genome via its interaction with HPV11 helicase E1. The chain is WD repeat-containing protein 48 from Homo sapiens (Human).